Reading from the N-terminus, the 1237-residue chain is Clustered mitochondria protein homolog (1237 aa).

One can recognise a Clu domain in the interval 291 to 535 (DITRSQENCL…RITPLDVAWS (245 aa)). Basic and acidic residues-rich tracts occupy residues 575 to 597 (RKTA…DKAE) and 845 to 854 (SQIKSQEHSP). 2 disordered regions span residues 575 to 614 (RKTA…AVAS) and 845 to 886 (SQIK…VAAS). 3 TPR repeats span residues 957–990 (AKLY…TERT), 999–1032 (ILSY…WKII), and 1041–1074 (ITTM…CEGL). Disordered stretches follow at residues 1152 to 1189 (RLRR…KSIG) and 1201 to 1237 (FIEG…VQTA). Residues 1156-1187 (TNLSPRMTIGTKPQPQVGQNAPATTNGATSKS) are compositionally biased toward polar residues.

Belongs to the CLU family. As to quaternary structure, may associate with the eukaryotic translation initiation factor 3 (eIF-3) complex.

It localises to the cytoplasm. In terms of biological role, mRNA-binding protein involved in proper cytoplasmic distribution of mitochondria. This is Clustered mitochondria protein homolog from Ajellomyces capsulatus (strain NAm1 / WU24) (Darling's disease fungus).